A 454-amino-acid polypeptide reads, in one-letter code: Keratin, type I cuticular Ha5 (454 aa).

The head stretch occupies residues 1–97 (MASKCLKASF…FGEGILTGNE (97 aa)). One can recognise an IF rod domain in the interval 97-407 (EKETMQFLND…GLLDSEDCKL (311 aa)). Residues 98-125 (KETMQFLNDRLASYLEKCGSWSGRTRSW) are coil 1A. The linker 1 stretch occupies residues 134 to 142 (SNSALPVPD). The interval 143-243 (YQSYFQTIEE…HEEEVNSLRC (101 aa)) is coil 1B. Positions 244–259 (QLGDRLNVEVDAAPPV) are linker 12. A coil 2 region spans residues 260–403 (DLNRVLNEMR…NTYRGLLDSE (144 aa)). A tail region spans residues 404–454 (DCKLPCNPCAPDHSPSKSCLPCLPAASCGPGMARTTCSPRPICVPCPGSRF).

This sequence belongs to the intermediate filament family.

This Bos taurus (Bovine) protein is Keratin, type I cuticular Ha5.